The chain runs to 220 residues: 14-3-3-like protein (220 aa).

It belongs to the 14-3-3 family.

The polypeptide is 14-3-3-like protein (Spinacia oleracea (Spinach)).